The sequence spans 358 residues: Alanine racemase (358 aa).

Lys-35 (proton acceptor; specific for D-alanine) is an active-site residue. An N6-(pyridoxal phosphate)lysine modification is found at Lys-35. Arg-130 is a binding site for substrate. Catalysis depends on Tyr-255, which acts as the Proton acceptor; specific for L-alanine. Met-303 lines the substrate pocket.

The protein belongs to the alanine racemase family. Pyridoxal 5'-phosphate is required as a cofactor.

The catalysed reaction is L-alanine = D-alanine. It functions in the pathway amino-acid biosynthesis; D-alanine biosynthesis; D-alanine from L-alanine: step 1/1. Catalyzes the interconversion of L-alanine and D-alanine. May also act on other amino acids. The chain is Alanine racemase (alr) from Shewanella woodyi (strain ATCC 51908 / MS32).